Here is a 305-residue protein sequence, read N- to C-terminus: UDP-3-O-acyl-N-acetylglucosamine deacetylase (305 aa).

Positions 79, 238, and 242 each coordinate Zn(2+). H265 (proton donor) is an active-site residue.

This sequence belongs to the LpxC family. It depends on Zn(2+) as a cofactor.

The catalysed reaction is a UDP-3-O-[(3R)-3-hydroxyacyl]-N-acetyl-alpha-D-glucosamine + H2O = a UDP-3-O-[(3R)-3-hydroxyacyl]-alpha-D-glucosamine + acetate. It participates in glycolipid biosynthesis; lipid IV(A) biosynthesis; lipid IV(A) from (3R)-3-hydroxytetradecanoyl-[acyl-carrier-protein] and UDP-N-acetyl-alpha-D-glucosamine: step 2/6. Catalyzes the hydrolysis of UDP-3-O-myristoyl-N-acetylglucosamine to form UDP-3-O-myristoylglucosamine and acetate, the committed step in lipid A biosynthesis. The protein is UDP-3-O-acyl-N-acetylglucosamine deacetylase of Salmonella typhi.